The following is a 289-amino-acid chain: Acetyl-coenzyme A carboxylase carboxyl transferase subunit beta (289 aa).

One can recognise a CoA carboxyltransferase N-terminal domain in the interval 34–289 (MWVKCNKCGE…KLINMHQNSF (256 aa)). The Zn(2+) site is built by C38, C41, C57, and C60. The C4-type zinc-finger motif lies at 38 to 60 (CNKCGEILYQNDLEKNYMVCNLC).

This sequence belongs to the AccD/PCCB family. As to quaternary structure, acetyl-CoA carboxylase is a heterohexamer composed of biotin carboxyl carrier protein (AccB), biotin carboxylase (AccC) and two subunits each of ACCase subunit alpha (AccA) and ACCase subunit beta (AccD). Zn(2+) is required as a cofactor.

It is found in the cytoplasm. It catalyses the reaction N(6)-carboxybiotinyl-L-lysyl-[protein] + acetyl-CoA = N(6)-biotinyl-L-lysyl-[protein] + malonyl-CoA. It functions in the pathway lipid metabolism; malonyl-CoA biosynthesis; malonyl-CoA from acetyl-CoA: step 1/1. Its function is as follows. Component of the acetyl coenzyme A carboxylase (ACC) complex. Biotin carboxylase (BC) catalyzes the carboxylation of biotin on its carrier protein (BCCP) and then the CO(2) group is transferred by the transcarboxylase to acetyl-CoA to form malonyl-CoA. This chain is Acetyl-coenzyme A carboxylase carboxyl transferase subunit beta, found in Clostridium botulinum (strain Kyoto / Type A2).